Consider the following 126-residue polypeptide: B3 domain-containing protein At5g54067 (126 aa).

The segment at residues 20-118 is a DNA-binding region (TF-B3); it reads SDIVGNVVLP…KFVVLNFQYS (99 aa).

It is found in the nucleus. This chain is B3 domain-containing protein At5g54067, found in Arabidopsis thaliana (Mouse-ear cress).